Reading from the N-terminus, the 92-residue chain is MYAISFDLVVADTAQNHPKGISQAYADIGYTLRKFGFTRIQGSLYTCQNEDMANLFSAINELKALPWFPSSVRDIRAFRIEQWSDFTSLVKS.

The protein belongs to the VapD ribonuclease family. Homodimer.

In terms of biological role, cleaves ssRNA, mostly between U:A. This chain is Endoribonuclease VapD homolog, found in Neisseria gonorrhoeae.